A 73-amino-acid chain; its full sequence is MHKTFYTFLMTQRNPDSTDAIAEFANNAFLDQSFPKQSKDFHELSQYLELNAGYLPTMTVFDDAWQAYLASEA.

This sequence belongs to the UPF0346 family.

The sequence is that of UPF0346 protein lp_1865 from Lactiplantibacillus plantarum (strain ATCC BAA-793 / NCIMB 8826 / WCFS1) (Lactobacillus plantarum).